A 461-amino-acid polypeptide reads, in one-letter code: MQRTQIVDALAATAPQPVIRLCGWVRTRRDAKGFSFLEINDGSCLANIQAIVDEGIPAYANIGAVSTGAAVDITGELVESPGKGQKWEVRVQTLTLLGAADAETYPLQKKRHSDEFLRSIAHLRARTNKYGAAFRIRSEAAFAIHEFYRERGFFYVHTPILTGSDCEGAGEMFRVTTLPVEGSPTPASGNRYENDFFGKECNLTVSGQLEAETLALGLGKVYTFGPTFRAENSNTPRHAAEFWMIEPEVAFADLEEDMNLAEDMTRTVVRRILDRCAADLDLFNRFVDTTLVERLRQIADEPFARCSYTEAIELLLKSGKKFEYPVSFGLDLQTEHERYLAEEHFGKPVIVYNYPKEIKAFYMRLNDDGRTVAAMDVLVPRIGELIGGSQREERLDVLEARINEMGQNLEDYWWYLDLRRFGSVPHAGFGMGFERLLMLLTGITNIRDVIPFPRTPGNLEF.

Belongs to the class-II aminoacyl-tRNA synthetase family. As to quaternary structure, homodimer.

It is found in the cytoplasm. It carries out the reaction tRNA(Asn) + L-asparagine + ATP = L-asparaginyl-tRNA(Asn) + AMP + diphosphate + H(+). In Nitratidesulfovibrio vulgaris (strain DP4) (Desulfovibrio vulgaris), this protein is Asparagine--tRNA ligase.